Consider the following 134-residue polypeptide: Cytochrome b5 (134 aa).

Ala-2 carries the N-acetylalanine modification. Lys-7, Lys-10, and Lys-19 each carry N6-acetyllysine. The 77-residue stretch at 9-85 folds into the Cytochrome b5 heme-binding domain; the sequence is VKYYTLEEIQ…SKTYIIGELH (77 aa). Heme-binding residues include His-44 and His-68. The helical transmembrane segment at 109–131 threads the bilayer; that stretch reads WWTNWVIPAISALVVALMYRLYM.

This sequence belongs to the cytochrome b5 family.

It localises to the endoplasmic reticulum membrane. It is found in the microsome membrane. Its function is as follows. Cytochrome b5 is a membrane-bound hemoprotein functioning as an electron carrier for several membrane-bound oxygenases. It is also involved in several steps of the sterol biosynthesis pathway, particularly in the C-6 double bond introduction during the C-6 desaturation. This is Cytochrome b5 (Cyb5a) from Rattus norvegicus (Rat).